The sequence spans 874 residues: Valine--tRNA ligase (874 aa).

The segment covering 1 to 10 has biased composition (polar residues); sequence MTENSQQQPP. A disordered region spans residues 1–23; the sequence is MTENSQQQPPASEPELPTQYAPA. The short motif at 57-67 is the 'HIGH' region element; the sequence is PNVTGSLHLGH. The 'KMSKS' region motif lies at 531 to 535; it reads KMSKS. K534 contacts ATP. Residues 806–871 adopt a coiled-coil conformation; sequence IDIVAERKRL…ARIQAQLDRM (66 aa).

It belongs to the class-I aminoacyl-tRNA synthetase family. ValS type 1 subfamily. In terms of assembly, monomer.

The protein resides in the cytoplasm. The enzyme catalyses tRNA(Val) + L-valine + ATP = L-valyl-tRNA(Val) + AMP + diphosphate. Functionally, catalyzes the attachment of valine to tRNA(Val). As ValRS can inadvertently accommodate and process structurally similar amino acids such as threonine, to avoid such errors, it has a 'posttransfer' editing activity that hydrolyzes mischarged Thr-tRNA(Val) in a tRNA-dependent manner. The chain is Valine--tRNA ligase from Streptomyces avermitilis (strain ATCC 31267 / DSM 46492 / JCM 5070 / NBRC 14893 / NCIMB 12804 / NRRL 8165 / MA-4680).